A 399-amino-acid chain; its full sequence is Formaldehyde dismutase (399 aa).

Cysteine 46 contacts Zn(2+). Position 47 to 51 (47 to 51) interacts with NAD(+); sequence GSDQH. Histidine 67, cysteine 97, cysteine 100, cysteine 103, cysteine 111, and aspartate 170 together coordinate Zn(2+). Threonine 174 provides a ligand contact to NAD(+). Histidine 177 lines the Zn(2+) pocket. NAD(+)-binding positions include 197-198, 218-219, arginine 223, valine 263, histidine 268, proline 299, 299-301, and 336-338; these read PV, DQ, PGI, and GMA.

This sequence belongs to the zinc-containing alcohol dehydrogenase family. In terms of assembly, homotetramer. It depends on Zn(2+) as a cofactor. NAD(+) serves as cofactor. The cofactor is NADH.

The enzyme catalyses 2 formaldehyde + H2O = methanol + formate + H(+). Inhibited by the substrate analog pyrazole but not by NAD analogs such as AMP, ADP, ATP or N-methylnicotinamide chloride. Active against a range of primary alcohols as well as some secondary alcohols. Exhibits higher activity against alcohols with longer carbon chains. This is Formaldehyde dismutase from Pseudomonas putida (Arthrobacter siderocapsulatus).